A 433-amino-acid chain; its full sequence is Ribosome biogenesis protein WDR12 homolog (433 aa).

The segment at 21 to 102 (VEVFVVSYRH…ESVISIECIV (82 aa)) is ubiquitin-like (UBL) domain. WD repeat units lie at residues 114-151 (ALLD…LTSS), 153-194 (LHEE…SSTF), 203-242 (GHER…TSTV), 270-310 (GHKD…QINT), 312-351 (AAKK…GTLV), 357-397 (GHCG…TPLY), and 401-433 (GHSD…RRKM).

This sequence belongs to the WD repeat WDR12/YTM1 family.

It localises to the nucleus. It is found in the nucleolus. The protein resides in the nucleoplasm. Functionally, required for maturation of ribosomal RNAs and formation of the large ribosomal subunit. This is Ribosome biogenesis protein WDR12 homolog from Brugia malayi (Filarial nematode worm).